The primary structure comprises 346 residues: Cytosolic sulfotransferase 17 (346 aa).

89–94 (KTGTTW) contributes to the 3'-phosphoadenylyl sulfate binding site. His151 acts as the Proton acceptor in catalysis. Residues Arg173, Ser181, Tyr239, and 309 to 311 (RKG) each bind 3'-phosphoadenylyl sulfate.

It belongs to the sulfotransferase 1 family. In terms of tissue distribution, highly expressed in roots, stems and mature leaves. Low expression in young leaves and flowers. Barely detected in siliques.

The protein localises to the cytoplasm. It carries out the reaction an aliphatic (Z)-desulfo-glucosinolate + 3'-phosphoadenylyl sulfate = a (Z)-omega-(methylsulfanyl)-N-sulfo-alkylhydroximate S-glucoside + adenosine 3',5'-bisphosphate + H(+). Its activity is regulated as follows. Inhibited by phosphoadenosine 5'-phosphate (PAP). Sulfotransferase that utilizes 3'-phospho-5'-adenylyl sulfate (PAPS) as sulfonate donor to catalyze the sulfate conjugation of desulfo-glucosinolates (dsGSs), the final step in the biosynthesis of the glucosinolate core structure. Substrate preference is desulfo-benzyl glucosinolate &gt; desulfo-6-methylthiohexyl glucosinolate. Increased specific activity with increasing chain length of desulfo-glucosinolate derived from methionine. Preferred substrate is desulfo-8-methylthiooctyl glucosinolate. This Arabidopsis thaliana (Mouse-ear cress) protein is Cytosolic sulfotransferase 17 (SOT17).